A 72-amino-acid chain; its full sequence is Translation initiation factor IF-1 (72 aa).

The S1-like domain maps to 1–72 (MAKDDVIEVE…TRGRITYRYK (72 aa)). Tyr-60 is modified (phosphotyrosine).

It belongs to the IF-1 family. As to quaternary structure, component of the 30S ribosomal translation pre-initiation complex which assembles on the 30S ribosome in the order IF-2 and IF-3, IF-1 and N-formylmethionyl-tRNA(fMet); mRNA recruitment can occur at any time during PIC assembly.

It is found in the cytoplasm. Functionally, one of the essential components for the initiation of protein synthesis. Stabilizes the binding of IF-2 and IF-3 on the 30S subunit to which N-formylmethionyl-tRNA(fMet) subsequently binds. Helps modulate mRNA selection, yielding the 30S pre-initiation complex (PIC). Upon addition of the 50S ribosomal subunit IF-1, IF-2 and IF-3 are released leaving the mature 70S translation initiation complex. This Geobacillus thermodenitrificans (strain NG80-2) protein is Translation initiation factor IF-1.